A 18141-amino-acid chain; its full sequence is Titin (18141 aa).

Residues 1-31 are compositionally biased toward low complexity; it reads MQRQNPNPYQQQNQQHQQVQQFSSQEYSHSS. Residues 1–69 are disordered; the sequence is MQRQNPNPYQ…QHHGGSIGGA (69 aa). A compositionally biased stretch (basic and acidic residues) spans 32 to 47; the sequence is QEQHQEQRISRTEQHV. The span at 48–62 shows a compositional bias: low complexity; that stretch reads QRSQVTTQRQVQQHH. 17 Ig-like domains span residues 86–177, 255–343, 372–461, 471–559, 618–708, 751–842, 890–981, 1024–1115, 1158–1249, 1291–1381, 1424–1515, 1558–1643, 1691–1781, 1824–1917, 1958–2050, 2089–2180, and 2222–2313; these read PPVF…VYIQ, PQIS…AVLA, PAFV…AQLN, PQFV…ARLY, PQFI…AILS, PQFI…SSIR, PQFK…AQLT, PRFL…ATMI, PVFV…ACVR, PQFT…CSVR, PRFL…VELQ, PVFT…EAIT, PVFT…ASLI, PVFV…LNVT, PQFG…VNVT, PIFL…CNVR, and PHFT…TNLR. The segment at 236 to 266 is disordered; that stretch reads EQDSQLSQELDRNQGPAQAPQISQKPRSSKL. A disulfide bridge links Cys393 with Cys445. Intrachain disulfides connect Cys1312/Cys1365, Cys1446/Cys1499, and Cys1579/Cys1632. A disulfide bridge connects residues Cys1846 and Cys1899. The cysteines at positions 2111 and 2164 are disulfide-linked. Residues 2338-2347 are compositionally biased toward basic and acidic residues; sequence STAPHQRQEP. Positions 2338-2357 are disordered; the sequence is STAPHQRQEPETPGTRQRPV. 3 consecutive Ig-like domains span residues 2356–2449, 2488–2581, and 2622–2715; these read PVFT…MRVV, PIFT…MKVK, and PVFT…LKIE. Residues 2731-2750 form a disordered region; the sequence is PRIGELEAPKEGRPEAPEPT. Over residues 2734-2746 the composition is skewed to basic and acidic residues; sequence GELEAPKEGRPEA. Ig-like domains follow at residues 2754-2844, 2891-2983, 3029-3116, 3130-3221, 3263-3354, 3401-3494, 3539-3625, 3676-3767, and 3811-3901; these read PVFI…GTLK, PPVW…TTIF, PRFT…AEIS, PRFT…TTLN, PKFI…ASLK, PVFT…MKIQ, PEFI…ATVS, PKFT…AKVT, and PKFT…ATVS. A disulfide bridge connects residues Cys2775 and Cys2828. An intrachain disulfide couples Cys3152 to Cys3205. 3 disulfides stabilise this stretch: Cys3560-Cys3613, Cys3698-Cys3751, and Cys3832-Cys3885. The stretch at 3910-3944 is one TPR 1 repeat; it reads LQNQVPRGMKRSDALTQMEATIKKYTSEVHLTEDD. 2 Ig-like domains span residues 3954–4047 and 4092–4181; these read PRFV…IKVS and PVFV…LKVV. Cys3976 and Cys4029 are oxidised to a cystine. Residues 4204–4229 are a coiled coil; the sequence is AAYQKERQENELEKVFDERKQVLSEQ. 2 disordered regions span residues 4226 to 4254 and 4299 to 4336; these read LSEQ…DWQQ and SSQA…PSES. Residues 4309–4322 show a composition bias toward polar residues; sequence YEENLQEKTSTTEV. Ig-like domains lie at 4394–4482, 4497–4585, 4604–4692, and 4703–4791; these read PVFT…ANLV, PSFV…GDCI, PHIV…AQLK, and PTIT…AKLT. Residues 4403-4438 form a TPR 2 repeat; sequence CRVFENEQAKFEVEFEGEPNPTVKWYRESFPIQNSP. An intrachain disulfide couples Cys4625 to Cys4676. 8 disordered regions span residues 4803 to 4891, 5318 to 5368, 5413 to 5648, 5667 to 5701, 5718 to 5748, 5775 to 5982, 6034 to 6350, and 6364 to 6393; these read RTID…DKGV, DELV…QPEP, RVIP…EVDA, IKKT…VPQK, KKTK…EVVQ, KEEE…QRLL, KRVK…MPVD, and EEEV…EASV. A compositionally biased stretch (low complexity) spans 4822–4841; that stretch reads PESPHAFQPGQQPGQQFGQF. Over residues 4852–4863 the composition is skewed to basic residues; that stretch reads GRSRQKKPKVRS. Basic and acidic residues-rich tracts occupy residues 5344 to 5357, 5436 to 5447, 5541 to 5552, 5591 to 5621, and 5633 to 5645; these read QPQE…HDEL, RPKEAVKAEEIQ, QKPDEQKQELPK, IEEK…EKPE, and PKSE…HPDE. Residues 5575–5613 form a TPR 3 repeat; sequence PVLWERKKKKPQPQDVIEEKLDVAPTKTYEKAVDVLPDE. A compositionally biased stretch (acidic residues) spans 5681-5697; that stretch reads EELFEEQPEEEISPEEE. Acidic residues-rich tracts occupy residues 5779–5792 and 5818–5860; these read IPTE…ETAE and DVEE…QDEI. Over residues 5865 to 5874 the composition is skewed to basic residues; sequence RKVKKAKKPK. Acidic residues predominate over residues 5883–5904; sequence EIEEDQPEEEVLQEEIIGEQEE. Positions 5910–5920 are enriched in basic residues; it reads RKVKSIKKPKK. The span at 5921–5971 shows a compositional bias: basic and acidic residues; sequence VVTEKTVDQTEQPEKPEESQAEEVKETVTEEPKKPKPAPEEAKVEQVEKIS. Residues 6034–6043 show a composition bias toward basic residues; that stretch reads KRVKKKKPKT. Residues 6049-6079 show a composition bias toward acidic residues; it reads ESTEEPAEETEEFEEEATQPEEVQPVEEIPE. Basic and acidic residues-rich tracts occupy residues 6081–6092, 6099–6133, 6141–6169, 6195–6209, 6217–6234, and 6259–6268; these read PQVKEVADERKT, RKEE…EVRL, IKPE…EEKR, EAEH…KPEE, KRGE…EKKW, and PIEEQQKPEK. A compositionally biased stretch (acidic residues) spans 6281–6290; that stretch reads PESEEEELEL. Residues 6291-6306 are compositionally biased toward basic and acidic residues; the sequence is EPLKLPEDKKPKEPKA. Over residues 6307–6318 the composition is skewed to basic residues; it reads KKEKKKKPKLKK. Acidic residues-rich tracts occupy residues 6325–6349 and 6364–6373; these read EVSE…EMPV and EEEVVPTEET. 7 Ig-like domains span residues 6536-6624, 6633-6728, 6741-6830, 6841-6929, 6942-7034, 7066-7151, and 7189-7279; these read PRIT…TNII, PQFT…NILS, PTVT…VVVS, PRFI…ATVN, PRFV…VKIQ, PKII…VAVT, and PSLL…FDIS. An intrachain disulfide couples Cys6557 to Cys6608. Residues Cys6964 and Cys7016 are joined by a disulfide bond. Residues 7621–7663 are a coiled coil; sequence KIQVQTKQIAQMNTKIKKHKKHKQQEQEVSETTIQCEQKETLA. 29 disordered regions span residues 7773-7793, 9414-9440, 9485-9510, 9556-9582, 9627-9652, 9698-9724, 9769-9796, 9838-9865, 9911-9937, 9982-10008, 10053-10080, 10125-10149, 10195-10220, 10266-10291, 10337-10364, 10408-10433, 10479-10504, 10550-10576, 10621-10648, 10692-10717, 10763-10788, 10834-10860, 10905-10932, 11047-11073, 11118-11143, 11189-11216, 11260-11286, 11679-11703, and 11767-11795; these read AKTA…VKAQ, EEDD…EEIQ, EEDD…PEEI, EEDD…EIQE, TAEE…PEEI, ENDK…PEEI, EELD…RGPD, and TEPE…LETP. Basic and acidic residues predominate over residues 7774–7783; it reads KTAESSKELP. Composition is skewed to acidic residues over residues 9429–9440, 9500–9510, 9571–9582, 9642–9652, 9713–9724, 9784–9796, 9855–9865, 9926–9937, 9997–10008, 10068–10080, 10139–10149, 10210–10220, 10281–10291, 10352–10364, 10423–10433, 10494–10504, 10565–10576, 10636–10648, 10707–10717, 10778–10788, 10849–10860, 10920–10932, 11062–11073, 11133–11143, 11204–11216, and 11275–11286; these read VPYEEEKPEEIQ, VPYEEEKPEEI, and VPYE…EIQE. The span at 11686 to 11699 shows a compositional bias: basic residues; it reads KPKKKTTKTRTFKK. A compositionally biased stretch (basic and acidic residues) spans 11780-11792; sequence PTKDKTPKQKKTL. Residues 11872-11905 form a TPR 4 repeat; that stretch reads KTVLQPYQRTEMELPQRARRDSSFKQPVKLTPMK. 18 disordered regions span residues 12003-12201, 12451-12471, 12685-12767, 12943-12971, 13131-13154, 13325-13349, 13471-13492, 13554-13576, 13702-13792, 13891-13914, 13951-13994, 14073-14094, 14109-14322, 14354-14377, 14414-14448, 14533-14566, 14583-14720, and 14756-14789; these read FKHS…ADTK, TLQV…KKPE, TVDD…LPGP, IDHE…KEKS, IKKK…ETRP, QSFE…KPKK, EEYE…KSHN, EADK…PLKK, KVQK…KSPD, EEVQ…KAKK, MKRK…DEPK, TTVP…RTKK, EEEA…QVTT, EYEP…RKVK, PLDS…ETPV, EPEI…KVKK, KVDL…SELP, and VEES…KSKK. Composition is skewed to basic and acidic residues over residues 12022-12035, 12044-12054, 12124-12134, 12183-12201, 12457-12471, and 12685-12709; these read ESDH…ELLH, EKIETPDESRK, MERTSDIREES, LNLR…ADTK, TEHE…KKPE, and TVDD…KISE. Over residues 12731–12741 the composition is skewed to acidic residues; it reads HDEDLQTDEYS. The span at 12750 to 12760 shows a compositional bias: basic residues; it reads KSKKKSTKKQK. Basic and acidic residues predominate over residues 13141-13154; it reads GPKEQVFEITETRP. Basic residues predominate over residues 13482 to 13492; sequence KKPKKKVKSHN. Residues 13566–13599 form a TPR 5 repeat; it reads QPIKKEKPLKKKKDVEYPVSLEAFDHTVKVVSEP. The span at 13733–13747 shows a compositional bias: basic and acidic residues; that stretch reads LVKEDLDQPIERALE. Positions 13771–13781 are enriched in basic residues; that stretch reads PKPKKISKPKS. 2 stretches are compositionally biased toward basic and acidic residues: residues 13893-13906 and 13975-13984; these read VQEK…EKKA and EDKPVEKISE. A compositionally biased stretch (basic and acidic residues) spans 14221–14240; it reads TVEKPLEALHTDSDLEKPDV. The span at 14264 to 14274 shows a compositional bias: low complexity; the sequence is KISSEQPKQPS. Residues 14282-14294 show a composition bias toward basic and acidic residues; the sequence is VTEHDLKPEEEKP. The segment covering 14542-14554 has biased composition (basic and acidic residues); the sequence is IEEHPEQSKEKLA. Residues 14555–14564 are compositionally biased toward basic residues; that stretch reads PKPKKTVRKV. Residues 14583 to 14599 are compositionally biased toward basic and acidic residues; sequence KVDLEKYEKVEMPEKPV. Positions 14652–14662 are enriched in low complexity; sequence ETTVDTTDIPE. Positions 14664–14683 are enriched in polar residues; it reads TPTQTAQPEDTATAQITPSA. A compositionally biased stretch (basic and acidic residues) spans 14684-14697; that stretch reads QEEKSTQDDTKDTI. Over residues 14756-14771 the composition is skewed to acidic residues; that stretch reads VEESQPIVEEVEDEEP. One copy of the TPR 6 repeat lies at 14904-14936; that stretch reads IPKTTDIGAIKDNGELSRNIEEAEEILKFKPHK. 8 disordered regions span residues 14956–15208, 15301–15329, 15425–15448, 15578–15597, 15697–15722, 15825–15876, 15951–15973, and 16181–16206; these read EKYI…VSVK, TRKK…IQPD, ISET…ETPK, IRVS…QFTV, EKPA…PKPE, EEPK…VEEP, ESQP…KAPI, and QEEE…KPLQ. 10 stretches are compositionally biased toward basic and acidic residues: residues 14967–14989, 15024–15046, 15069–15080, 15088–15097, 15109–15139, 15169–15179, 15189–15198, 15316–15325, 15425–15437, and 15578–15589; these read EKTP…DVKL, ELKQ…KDGE, QIEHPEIPEKVK, KPKDKSKSEP, PKEE…EIKL, IEDKAIDDEKK, QPKEQEIAKE, VTLKEPKEEQ, ISET…KPIE, and IRVSESEPKPEE. Residues 15703–15716 are compositionally biased toward acidic residues; sequence IVEEEEPVVTEPIE. Residues 15951–15964 are compositionally biased toward basic and acidic residues; that stretch reads ESQPEAVEDKEVSL. Residues 16183 to 16193 are compositionally biased toward acidic residues; that stretch reads EEYEEGEDIEE. In terms of domain architecture, SH3 spans 16409-16470; the sequence is ENLNIMYSIC…PAQYLMEPEE (62 aa). 9 consecutive Ig-like domains span residues 16501 to 16590, 16625 to 16719, 16728 to 16811, 16822 to 16916, 16919 to 17001, 17007 to 17091, 17097 to 17180, 17184 to 17270, and 17277 to 17363; these read PRFI…TELI, PTFS…ITLK, PQIL…ANLT, PPLF…VEVD, TFTK…STVE, PDFI…CELV, PEIV…AKLT, PLVD…TKLC, and PPVI…AEAS. An intrachain disulfide couples Cys16940 to Cys16989. The Fibronectin type-III 1 domain occupies 17374–17467; the sequence is APGTPQPLEI…LSPPIRLVPK (94 aa). Ig-like domains lie at 17473–17558 and 17563–17653; these read PSVQ…CRLK and PVLE…CTVQ. The cysteines at positions 17494 and 17542 are disulfide-linked. Fibronectin type-III domains lie at 17660-17755, 17760-17861, 17862-17958, and 17982-18078; these read RPQS…TKKF, PPRG…TPPS, PPQN…THAS, and PPTG…AMTA. Residues 17694–17728 form a TPR 7 repeat; sequence LEKCDVQNNVWMKVSDFNKDIKSYAVQKLSMNAQY. Residues 17741–17771 form a disordered region; the sequence is SEPTESDPVTITKKFEKPSPPRGPTTVSGMN.

This sequence belongs to the protein kinase superfamily. CAMK Ser/Thr protein kinase family. As to quaternary structure, interacts with Msp300; this interaction mediates the recruitment of Msp300 to the Z-disks. As to expression, expressed in the mesoderm at stage 11, several hours before myoblast fusion, and persists in most muscle cells, somatic, visceral and pharyngeal muscles and their precursors, until the third instar. Isoform A: Expressed in the indirect flight muscle (at protein level).

The protein localises to the cytoplasm. The protein resides in the nucleus. Its subcellular location is the chromosome. It localises to the myofibril. It is found in the sarcomere. The protein localises to the z line. Functionally, key component in the assembly and functioning of adult and embryonic striated muscles and muscle tendons. By providing connections at the level of individual microfilaments, it contributes to the fine balance of forces between the two halves of the sarcomere. The size and extensibility of the cross-links are the main determinants of sarcomere extensibility properties of muscle. In non-muscle cells, seems to play a role in chromosome condensation and chromosome segregation during mitosis. Might link the lamina network to chromatin or nuclear actin, or both during interphase. In Drosophila melanogaster (Fruit fly), this protein is Titin (sls).